Here is a 194-residue protein sequence, read N- to C-terminus: Protein GrpE (194 aa).

It belongs to the GrpE family. Homodimer.

The protein localises to the cytoplasm. In terms of biological role, participates actively in the response to hyperosmotic and heat shock by preventing the aggregation of stress-denatured proteins, in association with DnaK and GrpE. It is the nucleotide exchange factor for DnaK and may function as a thermosensor. Unfolded proteins bind initially to DnaJ; upon interaction with the DnaJ-bound protein, DnaK hydrolyzes its bound ATP, resulting in the formation of a stable complex. GrpE releases ADP from DnaK; ATP binding to DnaK triggers the release of the substrate protein, thus completing the reaction cycle. Several rounds of ATP-dependent interactions between DnaJ, DnaK and GrpE are required for fully efficient folding. The protein is Protein GrpE of Aliivibrio salmonicida (strain LFI1238) (Vibrio salmonicida (strain LFI1238)).